The following is a 282-amino-acid chain: MSDFSMETLKNLRQQTGVGLTKCKEALEHAKGNLEDAVVYLRKLGLASAGKKEHRETKEGVIAARVDERGAALVEVNVETDFVANNNVFRAFVTSLLSDLLDHELSDVDALALVMSSQEPSLSVEELKAVTMQTVGENIRISRAFYTPVNSGQSVGIYSHGNGKAVAIAFLSGSENQEALAKDIAMHIVASQPQFLSKESVPQEVLEREREVFSSQVAGKPQEVVEKITQGKFRAFFQEACLLEQAFIKDPEVTIQGLIDRAAKASGEPLKVEHFVFWKMGA.

Residues 80–83 (TDFV) are involved in Mg(2+) ion dislocation from EF-Tu.

The protein belongs to the EF-Ts family.

The protein localises to the cytoplasm. Functionally, associates with the EF-Tu.GDP complex and induces the exchange of GDP to GTP. It remains bound to the aminoacyl-tRNA.EF-Tu.GTP complex up to the GTP hydrolysis stage on the ribosome. This is Elongation factor Ts (tsf) from Chlamydia trachomatis serovar D (strain ATCC VR-885 / DSM 19411 / UW-3/Cx).